The following is a 334-amino-acid chain: Cytosolic Fe-S cluster assembly factor NUBP1 homolog (334 aa).

The tract at residues 1–24 (MSSAEVTAAAKPADAPEHCPGTAS) is disordered. [4Fe-4S] cluster is bound by residues C19, C33, C36, and C42. Residue 72 to 79 (GKGGVGKS) coordinates ATP. C247 and C250 together coordinate [4Fe-4S] cluster.

Belongs to the Mrp/NBP35 ATP-binding proteins family. NUBP1/NBP35 subfamily. As to quaternary structure, heterotetramer of 2 NUBP1 and 2 NUBP2 chains. The cofactor is [4Fe-4S] cluster.

Its subcellular location is the cytoplasm. Component of the cytosolic iron-sulfur (Fe/S) protein assembly (CIA) machinery. Required for maturation of extramitochondrial Fe-S proteins. The NUBP1-NUBP2 heterotetramer forms a Fe-S scaffold complex, mediating the de novo assembly of an Fe-S cluster and its transfer to target apoproteins. In Culex quinquefasciatus (Southern house mosquito), this protein is Cytosolic Fe-S cluster assembly factor NUBP1 homolog.